The following is a 243-amino-acid chain: LAAKLSYPIADDLDIYTRLGGMIWRADSKANYGRTGERLSNHDTGVSPLAAVGVEYALTKNWATRLDYQFVSNIGDAGTVGARPDNTMLSLGVSYRFGQDDVVAPAPAPAPAPVVETKLFTLKSDVLFNSAKSSLKPEGQQALDQLYTQLSSMDPKDGSVVVLGYTDPVGKDAANQKLSEARARSVVDYLVSKGIPADKISARGMGEADQVTDSCGYKNGRATKAQIECLAPNRRVEIEVKGI.

5 beta stranded membrane passes run 1–8 (LAAKLSYP), 13–21 (LDIYTRLGG), 48–57 (PLAAVGVEYA), 62–69 (WATRLDYQ), and 88–96 (MLSLGVSYR). Repeat copies occupy residues 104–105 (AP), 106–107 (AP), 108–109 (AP), 110–111 (AP), and 112–113 (AP). The interval 104–113 (APAPAPAPAP) is 5 X 2 AA tandem repeats of A-P. The 129-residue stretch at 115–243 (VETKLFTLKS…RRVEIEVKGI (129 aa)) folds into the OmpA-like domain. Cysteines 215 and 229 form a disulfide.

This sequence belongs to the outer membrane OOP (TC 1.B.6) superfamily. OmpA family. Monomer and homodimer.

It is found in the cell outer membrane. In terms of biological role, with TolR probably plays a role in maintaining the position of the peptidoglycan cell wall in the periplasm. Acts as a porin with low permeability that allows slow penetration of small solutes; an internal gate slows down solute passage. In Serratia odorifera, this protein is Outer membrane protein A.